The chain runs to 412 residues: CCA-adding enzyme (412 aa).

The ATP site is built by Ser-41 and Lys-44. Positions 41 and 44 each coordinate CTP. Residues Asp-53, Asp-55, and Asp-106 each contribute to the Mg(2+) site. ATP is bound by residues His-129, Lys-149, and Tyr-158. CTP is bound by residues His-129, Lys-149, and Tyr-158.

This sequence belongs to the tRNA nucleotidyltransferase/poly(A) polymerase family. Archaeal CCA-adding enzyme subfamily. In terms of assembly, homodimer. Mg(2+) is required as a cofactor.

The enzyme catalyses a tRNA precursor + 2 CTP + ATP = a tRNA with a 3' CCA end + 3 diphosphate. It carries out the reaction a tRNA with a 3' CCA end + 2 CTP + ATP = a tRNA with a 3' CCACCA end + 3 diphosphate. Its function is as follows. Catalyzes the addition and repair of the essential 3'-terminal CCA sequence in tRNAs without using a nucleic acid template. Adds these three nucleotides in the order of C, C, and A to the tRNA nucleotide-73, using CTP and ATP as substrates and producing inorganic pyrophosphate. tRNA 3'-terminal CCA addition is required both for tRNA processing and repair. Also involved in tRNA surveillance by mediating tandem CCA addition to generate a CCACCA at the 3' terminus of unstable tRNAs. While stable tRNAs receive only 3'-terminal CCA, unstable tRNAs are marked with CCACCA and rapidly degraded. The sequence is that of CCA-adding enzyme from Saccharolobus islandicus (strain M.16.27) (Sulfolobus islandicus).